We begin with the raw amino-acid sequence, 214 residues long: Metalloproteinase inhibitor 3 (214 aa).

The signal sequence occupies residues 1–26 (MSVCALTLILGCFLLFLGDISKPAEG). C27 contributes to the Zn(2+) binding site. 2 involved in metalloproteinase-binding regions span residues 27-30 (CTCA) and 91-92 (ES). 6 disulfides stabilise this stretch: C27/C94, C29/C121, C39/C146, C148/C195, C153/C158, and C166/C187. One can recognise an NTR domain in the interval 27-146 (CTCAPSHPQD…GLNHRYPLGC (120 aa)).

This sequence belongs to the protease inhibitor I35 (TIMP) family.

The protein resides in the secreted. It is found in the extracellular space. Its subcellular location is the extracellular matrix. Its function is as follows. Complexes with metalloproteinases (such as collagenases) and irreversibly inactivates them by binding to their catalytic zinc cofactor. May form part of a tissue-specific acute response to remodeling stimuli. This is Metalloproteinase inhibitor 3 (timp3) from Xenopus laevis (African clawed frog).